A 497-amino-acid chain; its full sequence is Transmembrane protein 200A (497 aa).

Residues 1–61 are Cytoplasmic-facing; the sequence is MIATGGVITG…RGKIRLYSAS (61 aa). Positions 20-30 are enriched in polar residues; it reads TRSQYHLSAQS. The disordered stretch occupies residues 20 to 44; sequence TRSQYHLSAQSPGPAPEKKTTKRKP. Residues 62 to 82 traverse the membrane as a helical segment; sequence GFFLVLGVLILMAGIAMAVLG. The Extracellular segment spans residues 83-127; sequence YWPHKDQPKAPETKMSANNTQSFGREQAGSIAQFLEQHMHSEKMK. N-linked (GlcNAc...) asparagine glycosylation occurs at Asn100. A helical membrane pass occupies residues 128–148; that stretch reads MLGPFTMGIGIFIFICANAIL. Over 149-497 the chain is Cytoplasmic; that stretch reads HENRDRETKV…LKRGTSETRF (349 aa). The span at 353–375 shows a compositional bias: low complexity; the sequence is SNSATESASSTSSRSSLSPGSTS. Disordered regions lie at residues 353–385 and 400–438; these read SNSA…GAAR and HSKS…GYTR. Residues 427–438 are compositionally biased toward basic and acidic residues; that stretch reads RLDRSNSKGYTR.

Belongs to the TMEM200 family.

The protein localises to the membrane. The polypeptide is Transmembrane protein 200A (tmem200a) (Danio rerio (Zebrafish)).